Reading from the N-terminus, the 304-residue chain is ULP1-interacting protein 4 (304 aa).

Residues D72–T269 form a disordered region. The span at E73–N83 shows a compositional bias: basic and acidic residues. The segment covering T129 to G149 has biased composition (polar residues). A Phosphoserine modification is found at S140. A compositionally biased stretch (basic and acidic residues) spans E155–E183. 2 positions are modified to phosphoserine: S185 and S205.

Interacts with ULP1.

It is found in the endoplasmic reticulum membrane. It localises to the mitochondrion outer membrane. The protein localises to the nucleus envelope. The polypeptide is ULP1-interacting protein 4 (UIP4) (Saccharomyces cerevisiae (strain ATCC 204508 / S288c) (Baker's yeast)).